A 298-amino-acid polypeptide reads, in one-letter code: ADP/ATP translocase 1 (298 aa).

Topologically, residues 1 to 7 (MSDQALS) are mitochondrial intermembrane. Ser-2 bears the N-acetylserine mark. One copy of the Solcar 1 repeat lies at 6-98 (LSFLKDFLAG…FAFKDKYKQI (93 aa)). The residue at position 7 (Ser-7) is a Phosphoserine. Residues 8-37 (FLKDFLAGGVAAAVSKTAVAPIERVKLLLQ) form a helical membrane-spanning segment. The Mitochondrial matrix portion of the chain corresponds to 38-74 (VQHASKQISAEKQYKGIIDCVVRIPKEQGFLSFWRGN). At Lys-52 the chain carries N6,N6,N6-trimethyllysine. Residues 75-99 (LANVIRYFPTQALNFAFKDKYKQIF) traverse the membrane as a helical segment. 2 residues coordinate ADP: Arg-80 and Lys-92. Topologically, residues 100–109 (LGGVDRHKQF) are mitochondrial intermembrane. A helical membrane pass occupies residues 110-130 (WRYFAGNLASGGAAGATSLCF). 2 Solcar repeats span residues 111–201 (RYFA…AKGM) and 212–297 (VSWM…IKKY). The Mitochondrial matrix segment spans residues 131–178 (VYPLDFARTRLAADVGKGAAQREFSGLGNCLTKIFKSDGLRGLYQGFN). Residue Lys-147 is modified to N6-succinyllysine. An S-nitrosocysteine modification is found at Cys-160. The helical transmembrane segment at 179-199 (VSVQGIIIYRAAYFGVYDTAK) threads the bilayer. The Mitochondrial intermembrane portion of the chain corresponds to 200-210 (GMLPDPKNVHI). The helical transmembrane segment at 211–231 (IVSWMIAQTVTAVAGLVSYPF) threads the bilayer. Topologically, residues 232–273 (DTVRRRMMMQSGRKGADIMYTGTVDCWKKIAKDEGAKAFFKG) are mitochondrial matrix. Arg-235 provides a ligand contact to ADP. An important for transport activity region spans residues 235-240 (RRRMMM). Positions 235 to 240 (RRRMMM) match the Nucleotide carrier signature motif motif. Residues Lys-245 and Lys-272 each carry the N6-succinyllysine modification. Residues 274–291 (AWSNVLRGMGGAFVLVLY) form a helical membrane-spanning segment. The Mitochondrial intermembrane portion of the chain corresponds to 292–298 (DEIKKYV).

It belongs to the mitochondrial carrier (TC 2.A.29) family. Monomer. Found in a complex with ARL2, ARL2BP and SLC25A4/ANT1. Interacts with ARL2BP. Interacts with TIMM44; leading to inhibit the presequence translocase TIMM23, thereby promoting stabilization of PINK1. Under cell death induction, transglutaminated by TGM2. Transglutamination leads to formation of covalent cross-links between a glutamine and the epsilon-amino group of a lysine residue, forming polymers.

Its subcellular location is the mitochondrion inner membrane. It is found in the membrane. It catalyses the reaction ADP(in) + ATP(out) = ADP(out) + ATP(in). It carries out the reaction H(+)(in) = H(+)(out). Its activity is regulated as follows. The matrix-open state (m-state) is inhibited by the membrane-permeable bongkrekic acid (BKA). The cytoplasmic-open state (c-state) is inhibited by the membrane-impermeable toxic inhibitor carboxyatractyloside (CATR). Proton transporter activity is inhibited by ADP:ATP antiporter activity. Its function is as follows. ADP:ATP antiporter that mediates import of ADP into the mitochondrial matrix for ATP synthesis, and export of ATP out to fuel the cell. Cycles between the cytoplasmic-open state (c-state) and the matrix-open state (m-state): operates by the alternating access mechanism with a single substrate-binding site intermittently exposed to either the cytosolic (c-state) or matrix (m-state) side of the inner mitochondrial membrane. In addition to its ADP:ATP antiporter activity, also involved in mitochondrial uncoupling and mitochondrial permeability transition pore (mPTP) activity. Plays a role in mitochondrial uncoupling by acting as a proton transporter: proton transport uncouples the proton flows via the electron transport chain and ATP synthase to reduce the efficiency of ATP production and cause mitochondrial thermogenesis. Proton transporter activity is inhibited by ADP:ATP antiporter activity, suggesting that SLC25A4/ANT1 acts as a master regulator of mitochondrial energy output by maintaining a delicate balance between ATP production (ADP:ATP antiporter activity) and thermogenesis (proton transporter activity). Proton transporter activity requires free fatty acids as cofactor, but does not transport it. Probably mediates mitochondrial uncoupling in tissues that do not express UCP1. Also plays a key role in mPTP opening, a non-specific pore that enables free passage of the mitochondrial membranes to solutes of up to 1.5 kDa, and which contributes to cell death. It is however unclear if SLC25A4/ANT1 constitutes a pore-forming component of mPTP or regulates it. Acts as a regulator of mitophagy independently of ADP:ATP antiporter activity: promotes mitophagy via interaction with TIMM44, leading to inhibit the presequence translocase TIMM23, thereby promoting stabilization of PINK1. The protein is ADP/ATP translocase 1 of Oryctolagus cuniculus (Rabbit).